Here is a 131-residue protein sequence, read N- to C-terminus: Peptide methionine sulfoxide reductase MsrB (131 aa).

A MsrB domain is found at D9–E131. Zn(2+) is bound by residues C48, C51, C97, and C100. The Nucleophile role is filled by C120.

The protein belongs to the MsrB Met sulfoxide reductase family. The cofactor is Zn(2+).

It carries out the reaction L-methionyl-[protein] + [thioredoxin]-disulfide + H2O = L-methionyl-(R)-S-oxide-[protein] + [thioredoxin]-dithiol. In Leptospira interrogans serogroup Icterohaemorrhagiae serovar Lai (strain 56601), this protein is Peptide methionine sulfoxide reductase MsrB.